Here is a 621-residue protein sequence, read N- to C-terminus: GPI-anchor transamidase component GPAA1 (621 aa).

Over 1–19 the chain is Cytoplasmic; sequence MGLLSDPVRRRALARIVLR. A helical membrane pass occupies residues 20 to 41; sequence LNTPLCVLSYVAGIAWFLALAF. Over 42–370 the chain is Lumenal; that stretch reads PPLTQRTYMS…LLPALSRFVS (329 aa). Y49 and S51 together coordinate a 2-acyl-6-[6-phosphoethanolamine-alpha-D-mannosyl-(1-&gt;2)-6-phosphoethanolamine-alpha-D-mannosyl-(1-&gt;6)-2-phosphoethanolamine-alpha-D-mannosyl-(1-&gt;4)-alpha-D-glucosaminyl]-1-(1-radyl,2-acyl-sn-glycero-3-phospho)-1D-myo-inositol. Residue N203 is glycosylated (N-linked (GlcNAc...) asparagine). A disulfide bridge connects residues C259 and C266. A 2-acyl-6-[6-phosphoethanolamine-alpha-D-mannosyl-(1-&gt;2)-6-phosphoethanolamine-alpha-D-mannosyl-(1-&gt;6)-2-phosphoethanolamine-alpha-D-mannosyl-(1-&gt;4)-alpha-D-glucosaminyl]-1-(1-radyl,2-acyl-sn-glycero-3-phospho)-1D-myo-inositol-binding residues include H354, Q355, and S356. Q355 serves as a coordination point for Mg(2+). The chain crosses the membrane as a helical span at residues 371–393; it reads IGLYMPATGFLLLVLGLKALELW. The Cytoplasmic portion of the chain corresponds to 394–425; it reads MQLHQAGVNPEEAGKAPSPGTPLLPTQGVGLA. A helical membrane pass occupies residues 426 to 450; that stretch reads SLTAPLLISQAMGLALYFLPVLGQH. Over 451–462 the chain is Lumenal; that stretch reads LATQHFPVAEAE. A helical transmembrane segment spans residues 463–483; sequence AVVLTLLAIYVAGLALPHNTH. The Cytoplasmic portion of the chain corresponds to 484 to 495; the sequence is RVVNSQVPDRGW. 2 helical membrane passes run 496–519 and 520–536; these read MALK…LNFS and LGFL…ALAK. The Cytoplasmic segment spans residues 537–540; that stretch reads PHGP. The chain crosses the membrane as a helical span at residues 541–563; the sequence is RTLYAALLVVTSPAVTLFGSLFL. The Lumenal portion of the chain corresponds to 564–597; that stretch reads WRELLEVPLSLAEGWQLFLTALAQGVLEHYTYGA. A helical transmembrane segment spans residues 598-619; that stretch reads LLFPILALGLYPCWLLFWNVLF. Over 620-621 the chain is Cytoplasmic; it reads WK.

In terms of assembly, heteropentamer. Part of the GPI-anchor transamidase complex, consisting of PIGK, PIGT, PIGS, PIGU and GAA1. Interacts with PIGK. In terms of tissue distribution, ubiquitously expressed in fetal and adult tissues. Expressed at higher levels in fetal tissues than adult tissues. In embryos abundant in the choroid plexus, skeletal muscle,.

Its subcellular location is the endoplasmic reticulum membrane. Its pathway is glycolipid biosynthesis; glycosylphosphatidylinositol-anchor biosynthesis. In terms of biological role, component of the glycosylphosphatidylinositol-anchor (GPI-anchor) transamidase (GPI-T) complex that catalyzes the formation of the linkage between a proprotein and a GPI-anchor and participates in GPI anchored protein biosynthesis. Binds GPI-anchor. The protein is GPI-anchor transamidase component GPAA1 of Mus musculus (Mouse).